The sequence spans 234 residues: Probable chemoreceptor glutamine deamidase CheD 1 (234 aa).

This sequence belongs to the CheD family.

It carries out the reaction L-glutaminyl-[protein] + H2O = L-glutamyl-[protein] + NH4(+). Its function is as follows. Probably deamidates glutamine residues to glutamate on methyl-accepting chemotaxis receptors (MCPs), playing an important role in chemotaxis. The protein is Probable chemoreceptor glutamine deamidase CheD 1 of Albidiferax ferrireducens (strain ATCC BAA-621 / DSM 15236 / T118) (Rhodoferax ferrireducens).